The primary structure comprises 69 residues: DNA-directed RNA polymerase subunit epsilon (69 aa).

Belongs to the RNA polymerase subunit epsilon family. RNAP is composed of a core of 2 alpha, a beta and a beta' subunit. The core is associated with a delta subunit, and at least one of epsilon or omega. When a sigma factor is associated with the core the holoenzyme is formed, which can initiate transcription.

The enzyme catalyses RNA(n) + a ribonucleoside 5'-triphosphate = RNA(n+1) + diphosphate. In terms of biological role, a non-essential component of RNA polymerase (RNAP). In Halalkalibacterium halodurans (strain ATCC BAA-125 / DSM 18197 / FERM 7344 / JCM 9153 / C-125) (Bacillus halodurans), this protein is DNA-directed RNA polymerase subunit epsilon.